A 379-amino-acid polypeptide reads, in one-letter code: Transcription termination factor Rho (379 aa).

The Rho RNA-BD domain maps to 1-68; sequence MTDKYGFLRS…KRIFQINGRF (68 aa). Residues 111–116, 123–128, and R154 contribute to the ATP site; these read GKGQRG and KTGKTT.

Belongs to the Rho family. As to quaternary structure, homohexamer. The homohexamer assembles into an open ring structure.

Facilitates transcription termination by a mechanism that involves Rho binding to the nascent RNA, activation of Rho's RNA-dependent ATPase activity, and release of the mRNA from the DNA template. This is Transcription termination factor Rho from Karelsulcia muelleri (strain SMDSEM) (Sulcia muelleri).